A 207-amino-acid polypeptide reads, in one-letter code: MPHSHCHSLRSFHNAPPLSAITHGTNPITFEDRLCLPSSFHSRTCFLDNFQETCNETTSCQMTNCEQDLFTDDSCVQSNCFPGVVQTTYSNSRPCERTACQSESSSAGLACVSQPCQSESTQQMGFVAQSCQPASLKGNSCPPKTSKSKNFETLERASSQCQCQSQNPESSSCRPLVNVAPEPQLLESSPGVEPTCCVTGGSQLPSK.

The segment at 184-207 (QLLESSPGVEPTCCVTGGSQLPSK) is disordered.

It belongs to the PMG family. As to quaternary structure, interacts with hair keratins.

In the hair cortex, hair keratin intermediate filaments are embedded in an interfilamentous matrix, consisting of hair keratin-associated proteins (KRTAP), which are essential for the formation of a rigid and resistant hair shaft through their extensive disulfide bond cross-linking with abundant cysteine residues of hair keratins. The matrix proteins include the high-sulfur and high-glycine-tyrosine keratins. The protein is Keratin-associated protein 27-1 (KRTAP27-1) of Homo sapiens (Human).